A 775-amino-acid chain; its full sequence is Chloride channel protein CLC-a (775 aa).

The segment at 1-28 (MDEDGNLQISNSNYNGEEEGEDPENNTL) is disordered. A run of 12 helical transmembrane segments spans residues 88-108 (TLAC…NLAV), 131-151 (GLMV…VLVV), 178-198 (FGFT…AAGL), 206-226 (LVHI…DNHR), 248-268 (GSAS…LFAL), 278-298 (ALLW…RAFI), 328-348 (AADI…GSLY), 371-391 (VLLS…LPFL), 453-473 (MVSL…TFGI), 478-498 (GLFL…GTAM), 510-530 (AVLG…SLCV), and 531-551 (IFLE…VLLI). 2 CBS domains span residues 595–658 (AKPP…FLNE) and 703–768 (TNTT…HLDK). Residues 730–750 (HLLVVPKIQASGMSPVIGILT) traverse the membrane as a helical segment.

Belongs to the chloride channel (TC 2.A.49) family. As to quaternary structure, homodimer. Interacts with PP2A5. Broadly expressed in the plant.

The protein localises to the membrane. Functionally, voltage-gated chloride channel that could play a role in the regulation of nitrate content. The polypeptide is Chloride channel protein CLC-a (CLC-A) (Arabidopsis thaliana (Mouse-ear cress)).